The chain runs to 332 residues: 2,3-diketo-L-gulonate reductase (332 aa).

Residue His44 is the Proton donor of the active site. NAD(+) is bound by residues 168–174 (ITMVDMS), 224–225 (WK), and 304–306 (GHE).

Belongs to the LDH2/MDH2 oxidoreductase family. DlgD subfamily. Homodimer.

It is found in the cytoplasm. It carries out the reaction 3-dehydro-L-gulonate + NAD(+) = 2,3-dioxo-L-gulonate + NADH + H(+). It catalyses the reaction 3-dehydro-L-gulonate + NADP(+) = 2,3-dioxo-L-gulonate + NADPH + H(+). Catalyzes the reduction of 2,3-diketo-L-gulonate in the presence of NADH, to form 3-keto-L-gulonate. The polypeptide is 2,3-diketo-L-gulonate reductase (Escherichia coli (strain SMS-3-5 / SECEC)).